The primary structure comprises 110 residues: Methionine-R-sulfoxide reductase B1-A (110 aa).

Positions 1–104 constitute a MsrB domain; it reads MSFCSFSGGE…FSSSLKFIPK (104 aa). 4 residues coordinate Zn(2+): cysteine 23, cysteine 26, cysteine 69, and cysteine 72. Catalysis depends on selenocysteine 93, which acts as the Nucleophile. A non-standard amino acid (selenocysteine) is located at residue selenocysteine 93.

This sequence belongs to the MsrB Met sulfoxide reductase family. Requires Zn(2+) as cofactor. In the embryo, expressed in the polster, paraxial mesoderm, tectum, otic vesicle and liver.

The protein localises to the cytoplasm. Its subcellular location is the nucleus. It localises to the cytoskeleton. It carries out the reaction L-methionyl-[protein] + [thioredoxin]-disulfide + H2O = L-methionyl-(R)-S-oxide-[protein] + [thioredoxin]-dithiol. It catalyses the reaction [thioredoxin]-disulfide + L-methionine + H2O = L-methionine (R)-S-oxide + [thioredoxin]-dithiol. Its function is as follows. Methionine-sulfoxide reductase that specifically reduces methionine (R)-sulfoxide back to methionine. While in many cases, methionine oxidation is the result of random oxidation following oxidative stress, methionine oxidation is also a post-translational modification that takes place on specific residue. Acts as a regulator of actin assembly by reducing methionine (R)-sulfoxide mediated by MICALs (mical1, mical2 or mical3) on actin, thereby promoting filament repolymerization. Plays a role in innate immunity by reducing oxidized actin, leading to actin repolymerization in macrophages. This is Methionine-R-sulfoxide reductase B1-A (msrb1) from Danio rerio (Zebrafish).